The sequence spans 206 residues: Pyridoxal 5'-phosphate synthase subunit PdxT (206 aa).

59 to 61 (GES) serves as a coordination point for L-glutamine. Catalysis depends on Cys-91, which acts as the Nucleophile. L-glutamine contacts are provided by residues Arg-123 and 151 to 152 (IR). Active-site charge relay system residues include His-187 and Glu-189.

It belongs to the glutaminase PdxT/SNO family. In terms of assembly, in the presence of PdxS, forms a dodecamer of heterodimers. Only shows activity in the heterodimer.

The catalysed reaction is aldehydo-D-ribose 5-phosphate + D-glyceraldehyde 3-phosphate + L-glutamine = pyridoxal 5'-phosphate + L-glutamate + phosphate + 3 H2O + H(+). The enzyme catalyses L-glutamine + H2O = L-glutamate + NH4(+). It participates in cofactor biosynthesis; pyridoxal 5'-phosphate biosynthesis. Catalyzes the hydrolysis of glutamine to glutamate and ammonia as part of the biosynthesis of pyridoxal 5'-phosphate. The resulting ammonia molecule is channeled to the active site of PdxS. This chain is Pyridoxal 5'-phosphate synthase subunit PdxT, found in Mycobacterium sp. (strain KMS).